A 74-amino-acid polypeptide reads, in one-letter code: Complement C5a anaphylatoxin (74 aa).

The segment at 15-44 (YAMLKKCCYDGAYRNDDETCEERAARIKIG) is involved in C5AR1 binding. Intrachain disulfides connect Cys21–Cys47, Cys22–Cys54, and Cys34–Cys55. One can recognise an Anaphylatoxin-like domain in the interval 21–55 (CCYDGAYRNDDETCEERAARIKIGPKCVKAFKDCC). Positions 72-74 (LGR) are required for 90% of C5a activity; although Arg-74 is not essential.

Its subcellular location is the secreted. In terms of biological role, mediator of local inflammatory process released following cleavage by C5 convertase. Acts by binding to its receptor (C5AR1 or C5AR2), activating G protein-coupled receptor signaling and inducing a variety of responses including intracellular calcium release, contraction of smooth muscle, increased vascular permeability, and histamine release from mast cells and basophilic leukocytes. C5a is also a potent chemokine which stimulates the locomotion of polymorphonuclear leukocytes and directs their migration toward sites of inflammation. This Sus scrofa (Pig) protein is Complement C5a anaphylatoxin (C5).